The sequence spans 194 residues: Large ribosomal subunit protein bL9 (194 aa).

The tract at residues 165-194 is disordered; that stretch reads PEDAEEAVANEEEAEAALLDDEDADEYEQG. Residues 166–194 are compositionally biased toward acidic residues; it reads EDAEEAVANEEEAEAALLDDEDADEYEQG.

The protein belongs to the bacterial ribosomal protein bL9 family.

In terms of biological role, binds to the 23S rRNA. In Rhodospirillum rubrum (strain ATCC 11170 / ATH 1.1.1 / DSM 467 / LMG 4362 / NCIMB 8255 / S1), this protein is Large ribosomal subunit protein bL9.